A 968-amino-acid polypeptide reads, in one-letter code: Glycine dehydrogenase (decarboxylating) (968 aa).

The residue at position 712 (Lys-712) is an N6-(pyridoxal phosphate)lysine.

Belongs to the GcvP family. In terms of assembly, the glycine cleavage system is composed of four proteins: P, T, L and H. Pyridoxal 5'-phosphate is required as a cofactor.

The catalysed reaction is N(6)-[(R)-lipoyl]-L-lysyl-[glycine-cleavage complex H protein] + glycine + H(+) = N(6)-[(R)-S(8)-aminomethyldihydrolipoyl]-L-lysyl-[glycine-cleavage complex H protein] + CO2. Functionally, the glycine cleavage system catalyzes the degradation of glycine. The P protein binds the alpha-amino group of glycine through its pyridoxal phosphate cofactor; CO(2) is released and the remaining methylamine moiety is then transferred to the lipoamide cofactor of the H protein. This Prochlorococcus marinus (strain NATL1A) protein is Glycine dehydrogenase (decarboxylating).